Reading from the N-terminus, the 83-residue chain is Phytosulfokines 4 (83 aa).

An N-terminal signal peptide occupies residues 1 to 28 (MAARTVAVAAALAVLLIFAASSATVAMA). The propeptide occupies 29–74 (GRPTPTTSLDEEAAQAAAQSEIGGGCKEGEGEEECLARRTLTAHTD). Sulfotyrosine occurs at positions 75 and 77. A propeptide spanning residues 80–83 (QHHN) is cleaved from the precursor.

It belongs to the phytosulfokine family. Sulfation is important for activity and for the binding to a putative membrane receptor. Post-translationally, PSK-alpha is produced by endopeptidase digestion. PSK-beta is produced from PSK-alpha by exopeptidase digestion.

It is found in the secreted. Promotes plant cell differentiation, organogenesis and somatic embryogenesis as well as cell proliferation. The protein is Phytosulfokines 4 (PSK4) of Oryza sativa subsp. japonica (Rice).